The sequence spans 319 residues: Acetyl-coenzyme A carboxylase carboxyl transferase subunit alpha (319 aa).

The 262-residue stretch at 35 to 296 folds into the CoA carboxyltransferase C-terminal domain; sequence NIDEEVHRLR…KAQLLTDLAD (262 aa).

This sequence belongs to the AccA family. In terms of assembly, acetyl-CoA carboxylase is a heterohexamer composed of biotin carboxyl carrier protein (AccB), biotin carboxylase (AccC) and two subunits each of ACCase subunit alpha (AccA) and ACCase subunit beta (AccD).

It is found in the cytoplasm. The enzyme catalyses N(6)-carboxybiotinyl-L-lysyl-[protein] + acetyl-CoA = N(6)-biotinyl-L-lysyl-[protein] + malonyl-CoA. The protein operates within lipid metabolism; malonyl-CoA biosynthesis; malonyl-CoA from acetyl-CoA: step 1/1. Functionally, component of the acetyl coenzyme A carboxylase (ACC) complex. First, biotin carboxylase catalyzes the carboxylation of biotin on its carrier protein (BCCP) and then the CO(2) group is transferred by the carboxyltransferase to acetyl-CoA to form malonyl-CoA. The sequence is that of Acetyl-coenzyme A carboxylase carboxyl transferase subunit alpha from Escherichia coli O45:K1 (strain S88 / ExPEC).